The chain runs to 162 residues: Phosphopantetheine adenylyltransferase (162 aa).

Threonine 10 serves as a coordination point for substrate. ATP contacts are provided by residues 10–11 (TF) and histidine 18. Substrate contacts are provided by lysine 42, methionine 74, and arginine 88. Residues 89 to 91 (GLR), glutamate 99, and 124 to 130 (YAFLSST) contribute to the ATP site.

It belongs to the bacterial CoaD family. In terms of assembly, homohexamer. The cofactor is Mg(2+).

It localises to the cytoplasm. The catalysed reaction is (R)-4'-phosphopantetheine + ATP + H(+) = 3'-dephospho-CoA + diphosphate. The protein operates within cofactor biosynthesis; coenzyme A biosynthesis; CoA from (R)-pantothenate: step 4/5. In terms of biological role, reversibly transfers an adenylyl group from ATP to 4'-phosphopantetheine, yielding dephospho-CoA (dPCoA) and pyrophosphate. The polypeptide is Phosphopantetheine adenylyltransferase (Aliivibrio fischeri (strain ATCC 700601 / ES114) (Vibrio fischeri)).